The chain runs to 253 residues: Sec-independent protein translocase protein TatC (253 aa).

5 helical membrane-spanning segments follow: residues 19-39 (ILII…LATP), 70-90 (FAFT…LWAF), 109-129 (IAFF…FPFL), 154-174 (FLFQ…VVMF), and 194-214 (FFVL…SHLM).

Belongs to the TatC family. As to quaternary structure, forms a complex with TatA.

It localises to the cell membrane. Its function is as follows. Part of the twin-arginine translocation (Tat) system that transports large folded proteins containing a characteristic twin-arginine motif in their signal peptide across membranes. The sequence is that of Sec-independent protein translocase protein TatC from Halalkalibacterium halodurans (strain ATCC BAA-125 / DSM 18197 / FERM 7344 / JCM 9153 / C-125) (Bacillus halodurans).